Here is a 186-residue protein sequence, read N- to C-terminus: Large ribosomal subunit protein uL5 (186 aa).

This sequence belongs to the universal ribosomal protein uL5 family. Part of the 50S ribosomal subunit; part of the 5S rRNA/L5/L18/L25 subcomplex. Contacts the 5S rRNA and the P site tRNA. Forms a bridge to the 30S subunit in the 70S ribosome.

Functionally, this is one of the proteins that bind and probably mediate the attachment of the 5S RNA into the large ribosomal subunit, where it forms part of the central protuberance. In the 70S ribosome it contacts protein S13 of the 30S subunit (bridge B1b), connecting the 2 subunits; this bridge is implicated in subunit movement. Contacts the P site tRNA; the 5S rRNA and some of its associated proteins might help stabilize positioning of ribosome-bound tRNAs. The polypeptide is Large ribosomal subunit protein uL5 (Phenylobacterium zucineum (strain HLK1)).